A 294-amino-acid polypeptide reads, in one-letter code: tRNA dimethylallyltransferase (294 aa).

7-14 (GPTGSGKS) provides a ligand contact to ATP. 9–14 (TGSGKS) lines the substrate pocket.

It belongs to the IPP transferase family. As to quaternary structure, monomer. Requires Mg(2+) as cofactor.

It carries out the reaction adenosine(37) in tRNA + dimethylallyl diphosphate = N(6)-dimethylallyladenosine(37) in tRNA + diphosphate. Functionally, catalyzes the transfer of a dimethylallyl group onto the adenine at position 37 in tRNAs that read codons beginning with uridine, leading to the formation of N6-(dimethylallyl)adenosine (i(6)A). The protein is tRNA dimethylallyltransferase of Akkermansia muciniphila (strain ATCC BAA-835 / DSM 22959 / JCM 33894 / BCRC 81048 / CCUG 64013 / CIP 107961 / Muc).